The sequence spans 303 residues: D-alanine--D-alanine ligase (303 aa).

Positions 104 to 300 (KLMWQAVGLP…FEKLVERVLE (197 aa)) constitute an ATP-grasp domain. Residue 132 to 187 (IAKLGLPVFVKPSSEGSSVGVTKVKTVEQLLPAVEEALKFDSIVLVEAFLAGKEYS) coordinates ATP. Residues Asp254, Glu267, and Asn269 each contribute to the Mg(2+) site.

It belongs to the D-alanine--D-alanine ligase family. The cofactor is Mg(2+). Requires Mn(2+) as cofactor.

Its subcellular location is the cytoplasm. It catalyses the reaction 2 D-alanine + ATP = D-alanyl-D-alanine + ADP + phosphate + H(+). The protein operates within cell wall biogenesis; peptidoglycan biosynthesis. Functionally, cell wall formation. This Actinobacillus pleuropneumoniae serotype 5b (strain L20) protein is D-alanine--D-alanine ligase.